The chain runs to 423 residues: Putative competence-damage inducible protein (423 aa).

Belongs to the CinA family.

The polypeptide is Putative competence-damage inducible protein (Streptococcus equi subsp. equi (strain 4047)).